A 415-amino-acid chain; its full sequence is Serine hydroxymethyltransferase (415 aa).

Residues leucine 120 and 124–126 each bind (6S)-5,6,7,8-tetrahydrofolate; that span reads GHL. Lysine 229 carries the post-translational modification N6-(pyridoxal phosphate)lysine.

This sequence belongs to the SHMT family. As to quaternary structure, homodimer. Requires pyridoxal 5'-phosphate as cofactor.

It is found in the cytoplasm. The catalysed reaction is (6R)-5,10-methylene-5,6,7,8-tetrahydrofolate + glycine + H2O = (6S)-5,6,7,8-tetrahydrofolate + L-serine. The protein operates within one-carbon metabolism; tetrahydrofolate interconversion. It functions in the pathway amino-acid biosynthesis; glycine biosynthesis; glycine from L-serine: step 1/1. Its function is as follows. Catalyzes the reversible interconversion of serine and glycine with tetrahydrofolate (THF) serving as the one-carbon carrier. This reaction serves as the major source of one-carbon groups required for the biosynthesis of purines, thymidylate, methionine, and other important biomolecules. Also exhibits THF-independent aldolase activity toward beta-hydroxyamino acids, producing glycine and aldehydes, via a retro-aldol mechanism. This is Serine hydroxymethyltransferase from Pelotomaculum thermopropionicum (strain DSM 13744 / JCM 10971 / SI).